We begin with the raw amino-acid sequence, 90 residues long: Probable Fe(2+)-trafficking protein (90 aa).

This sequence belongs to the Fe(2+)-trafficking protein family.

Could be a mediator in iron transactions between iron acquisition and iron-requiring processes, such as synthesis and/or repair of Fe-S clusters in biosynthetic enzymes. The polypeptide is Probable Fe(2+)-trafficking protein (Albidiferax ferrireducens (strain ATCC BAA-621 / DSM 15236 / T118) (Rhodoferax ferrireducens)).